Reading from the N-terminus, the 181-residue chain is Peptide deformylase (181 aa).

C103 and H145 together coordinate Fe cation. E146 is a catalytic residue. H149 is a binding site for Fe cation.

It belongs to the polypeptide deformylase family. Fe(2+) serves as cofactor.

The catalysed reaction is N-terminal N-formyl-L-methionyl-[peptide] + H2O = N-terminal L-methionyl-[peptide] + formate. Its function is as follows. Removes the formyl group from the N-terminal Met of newly synthesized proteins. Requires at least a dipeptide for an efficient rate of reaction. N-terminal L-methionine is a prerequisite for activity but the enzyme has broad specificity at other positions. The protein is Peptide deformylase of Orientia tsutsugamushi (strain Boryong) (Rickettsia tsutsugamushi).